The sequence spans 448 residues: RING finger protein 44 (448 aa).

The RING-type; atypical zinc finger occupies 396–437; the sequence is CVVCFSDFESRQLLRVLPCNHEFHAKCVDKWLKTNRTCPICR.

The polypeptide is RING finger protein 44 (rnf44) (Danio rerio (Zebrafish)).